Here is a 172-residue protein sequence, read N- to C-terminus: Adenine phosphoribosyltransferase (172 aa).

This sequence belongs to the purine/pyrimidine phosphoribosyltransferase family. As to quaternary structure, homodimer.

Its subcellular location is the cytoplasm. It carries out the reaction AMP + diphosphate = 5-phospho-alpha-D-ribose 1-diphosphate + adenine. Its pathway is purine metabolism; AMP biosynthesis via salvage pathway; AMP from adenine: step 1/1. Functionally, catalyzes a salvage reaction resulting in the formation of AMP, that is energically less costly than de novo synthesis. In Streptococcus agalactiae serotype Ia (strain ATCC 27591 / A909 / CDC SS700), this protein is Adenine phosphoribosyltransferase.